The chain runs to 470 residues: Probable glycosyltransferase At3g07620 (470 aa).

Residues 1 to 7 lie on the Cytoplasmic side of the membrane; that stretch reads MRDYIPK. Residues 8–28 form a helical; Signal-anchor membrane-spanning segment; that stretch reads YLNAFLLAFATFAVGFAIFIA. Topologically, residues 29-470 are lumenal; the sequence is KDSNSSSHLY…WLRRLNVKLL (442 aa). 6 N-linked (GlcNAc...) asparagine glycosylation sites follow: Asn-32, Asn-73, Asn-105, Asn-236, Asn-274, and Asn-299.

Belongs to the glycosyltransferase 47 family.

The protein resides in the golgi apparatus membrane. In terms of biological role, may be involved in cell wall biosynthesis. The protein is Probable glycosyltransferase At3g07620 of Arabidopsis thaliana (Mouse-ear cress).